Reading from the N-terminus, the 1434-residue chain is Protein patched homolog 1 (1434 aa).

Positions 1-13 (MASAGNAAGALGR) are enriched in low complexity. The interval 1–34 (MASAGNAAGALGRQAGGGRRRRTGGPHRAAPDRD) is disordered. The Cytoplasmic portion of the chain corresponds to 1–86 (MASAGNAAGA…GCYIQKNCGK (86 aa)). The chain crosses the membrane as a helical span at residues 87–107 (FLVVGLLIFGAFAVGLKAANL). Topologically, residues 108–422 (ETNVEELWVE…LDDILKSFSD (315 aa)) are extracellular. Asparagine 127, asparagine 298, asparagine 335, and asparagine 400 each carry an N-linked (GlcNAc...) asparagine glycan. Residues 423 to 443 (VSVIRVASGYLLMLAYACLTM) traverse the membrane as a helical segment. One can recognise an SSD domain in the interval 424 to 584 (SVIRVASGYL…LLIFPAILSM (161 aa)). Topologically, residues 444 to 458 (LRWDCSKSQGAVGLA) are cytoplasmic. Residues 459 to 479 (GVLLVALSVAAGLGLCSLIGI) form a helical membrane-spanning segment. Residues 480 to 487 (SFNAATTQ) lie on the Extracellular side of the membrane. A helical transmembrane segment spans residues 488–508 (VLPFLALGVGVDDVFLLAHAF). The Cytoplasmic portion of the chain corresponds to 509 to 533 (SETGQNKRIPFEDRTGECLKRTGAS). The chain crosses the membrane as a helical span at residues 534–554 (VALTSISNVTAFFMAALIPIP). Residues 555–563 (ALRAFSLQA) are Extracellular-facing. A helical membrane pass occupies residues 564–584 (AVVVVFNFAMVLLIFPAILSM). Over 585 to 734 (DLYRREDRRL…HYAPFLLKPK (150 aa)) the chain is Cytoplasmic. The helical transmembrane segment at 735–755 (AKVVVILLFLGLLGVSLYGTT) threads the bilayer. Over 756–1013 (RVRDGLDLTD…WEQYISLRHW (258 aa)) the chain is Extracellular. Asparagine 861 and asparagine 986 each carry an N-linked (GlcNAc...) asparagine glycan. A helical membrane pass occupies residues 1014 to 1034 (LLLSISVVLACTFLVCAVFLL). Over 1035–1039 (NPWTA) the chain is Cytoplasmic. A helical membrane pass occupies residues 1040-1060 (GIIVMVLALMTVELFGMMGLI). Over 1061-1069 (GIKLSAVPV) the chain is Extracellular. A helical membrane pass occupies residues 1070–1090 (VILIASVGIGVEFTVHVALAF). At 1091–1107 (LTAIGDKNHRAMLALEH) the chain is on the cytoplasmic side. A helical membrane pass occupies residues 1108–1128 (MFAPVLDGAVSTLLGVLMLAG). Residues 1129 to 1140 (SEFDFIVRYFFA) are Extracellular-facing. Residues 1141–1161 (VLAILTVLGVLNGLVLLPVLL) form a helical membrane-spanning segment. The Cytoplasmic segment spans residues 1162–1434 (SFFGPCPEVS…EERPWGSSSN (273 aa)). 3 disordered regions span residues 1175 to 1219 (GLNR…TVSG), 1257 to 1348 (HPDS…SSVP), and 1368 to 1396 (HPPP…HGVF). The residue at position 1181 (threonine 1181) is a Phosphothreonine. Residue serine 1183 is modified to Phosphoserine. The segment covering 1204–1213 (SDSSDSEYSS) has biased composition (low complexity). Residues 1288–1297 (PRRDPPREGL) are compositionally biased toward basic and acidic residues. The span at 1335-1348 (PRNPTSTAMGSSVP) shows a compositional bias: polar residues. Lysine 1413 is covalently cross-linked (Glycyl lysine isopeptide (Lys-Gly) (interchain with G-Cter in ubiquitin)).

It belongs to the patched family. As to quaternary structure, interacts with SNX17. Interacts with IHH. Interacts with G-protein coupled receptor GPR37L1. Glycosylation is necessary for SHH binding. Post-translationally, in the absence of Hh ligands, ubiquitination by ITCH at Lys-1413 promotes endocytosis and both proteasomal and lysosomal degradation. In terms of tissue distribution, detected in cerebellar Bergmann glia cells (at protein level). In the developing embryo, first detected within the ventral neural tube and later in the somites and limb buds. Expression in the limb buds is restricted to the posterior ectoderm surrounding the zone of polarizing activity. In the adult, expression is seen in brain, lung, liver, kidney and ocular tissues; lower levels in heart, skeletal muscle, and testis.

The protein resides in the cell membrane. In terms of biological role, acts as a receptor for sonic hedgehog (SHH), indian hedgehog (IHH) and desert hedgehog (DHH). Associates with the smoothened protein (SMO) to transduce the hedgehog's proteins signal. Seems to have a tumor suppressor function, as inactivation of this protein is probably a necessary, if not sufficient step for tumorigenesis. In Mus musculus (Mouse), this protein is Protein patched homolog 1 (Ptch1).